The chain runs to 325 residues: DNA-directed RNA polymerase subunit alpha (325 aa).

Positions 1-238 (MSPKNLLKGF…DHLTVFINFE (238 aa)) are alpha N-terminal domain (alpha-NTD). Residues 255 to 325 (LKAALSKHVE…MGLSFGMRDF (71 aa)) form an alpha C-terminal domain (alpha-CTD) region.

The protein belongs to the RNA polymerase alpha chain family. Homodimer. The RNAP catalytic core consists of 2 alpha, 1 beta, 1 beta' and 1 omega subunit. When a sigma factor is associated with the core the holoenzyme is formed, which can initiate transcription.

It catalyses the reaction RNA(n) + a ribonucleoside 5'-triphosphate = RNA(n+1) + diphosphate. DNA-dependent RNA polymerase catalyzes the transcription of DNA into RNA using the four ribonucleoside triphosphates as substrates. This Leptospira biflexa serovar Patoc (strain Patoc 1 / Ames) protein is DNA-directed RNA polymerase subunit alpha.